A 253-amino-acid chain; its full sequence is Geranylgeranylglyceryl phosphate synthase (253 aa).

Asp-23 and Ser-52 together coordinate Mg(2+). Sn-glycerol 1-phosphate-binding positions include 171-177 (YFEAGSG), 202-203 (GG), and 224-225 (GT).

This sequence belongs to the GGGP/HepGP synthase family. Group II subfamily. Homodimer. Mg(2+) is required as a cofactor.

It localises to the cytoplasm. The enzyme catalyses sn-glycerol 1-phosphate + (2E,6E,10E)-geranylgeranyl diphosphate = sn-3-O-(geranylgeranyl)glycerol 1-phosphate + diphosphate. Its pathway is membrane lipid metabolism; glycerophospholipid metabolism. Inhibited by high concentrations of magnesium (&gt;10 mM) and by EDTA in vitro. Its function is as follows. Prenyltransferase that catalyzes the transfer of the geranylgeranyl moiety of geranylgeranyl diphosphate (GGPP) to the C3 hydroxyl of sn-glycerol-1-phosphate (G1P). This reaction is the first ether-bond-formation step in the biosynthesis of archaeal membrane lipids. Cannot use sn-glycerol-3-phosphate (G3P) as substrate. The polypeptide is Geranylgeranylglyceryl phosphate synthase (Thermoplasma acidophilum (strain ATCC 25905 / DSM 1728 / JCM 9062 / NBRC 15155 / AMRC-C165)).